A 119-amino-acid polypeptide reads, in one-letter code: MARVKFGKVTRRRRKKILKLAKGYFGAKSKLFRVANQAVMKSLMYAYIGRKLRKRDFRKLWITRINAAARAHGISYSRFINGLKKAGIEINRKMLSEMAINDEKAFAELVNIAKQQLNA.

This sequence belongs to the bacterial ribosomal protein bL20 family.

Its function is as follows. Binds directly to 23S ribosomal RNA and is necessary for the in vitro assembly process of the 50S ribosomal subunit. It is not involved in the protein synthesizing functions of that subunit. In Thermoanaerobacter pseudethanolicus (strain ATCC 33223 / 39E) (Clostridium thermohydrosulfuricum), this protein is Large ribosomal subunit protein bL20.